A 223-amino-acid chain; its full sequence is Probable iron-sulfur cluster repair protein HI_1677 (223 aa).

Belongs to the RIC family.

The protein localises to the cytoplasm. In terms of biological role, di-iron-containing protein involved in the repair of iron-sulfur clusters. In Haemophilus influenzae (strain ATCC 51907 / DSM 11121 / KW20 / Rd), this protein is Probable iron-sulfur cluster repair protein HI_1677.